The following is a 359-amino-acid chain: uncharacterized protein (359 aa).

3 disordered regions span residues glutamine 90–lysine 117, isoleucine 132–serine 161, and threonine 235–arginine 359. Over residues threonine 151–serine 161 the composition is skewed to polar residues. Over residues lysine 245–proline 259 the composition is skewed to low complexity. Residues glutamate 286–proline 299 are compositionally biased toward basic and acidic residues.

This is an uncharacterized protein from Homo sapiens (Human).